Reading from the N-terminus, the 337-residue chain is Tetraacyldisaccharide 4'-kinase (337 aa).

Residue 55 to 62 (NAGGTGKT) coordinates ATP.

It belongs to the LpxK family.

The enzyme catalyses a lipid A disaccharide + ATP = a lipid IVA + ADP + H(+). Its pathway is glycolipid biosynthesis; lipid IV(A) biosynthesis; lipid IV(A) from (3R)-3-hydroxytetradecanoyl-[acyl-carrier-protein] and UDP-N-acetyl-alpha-D-glucosamine: step 6/6. In terms of biological role, transfers the gamma-phosphate of ATP to the 4'-position of a tetraacyldisaccharide 1-phosphate intermediate (termed DS-1-P) to form tetraacyldisaccharide 1,4'-bis-phosphate (lipid IVA). The polypeptide is Tetraacyldisaccharide 4'-kinase (Dinoroseobacter shibae (strain DSM 16493 / NCIMB 14021 / DFL 12)).